A 257-amino-acid chain; its full sequence is Transmembrane protein 101 (257 aa).

8 helical membrane passes run 21–40 (VLLTRCPFWGCFSQLMLYAE), 52–72 (VPYLYFDMGAAVLCASFMSFG), 77–97 (WFALGAALQLAISTYAAYVGG), 110–130 (YSRTVAIIGGFLVLASGAGEL), 139–159 (SLQSTGQVFLGVYLVCVAYSL), 182–202 (LFFVLYGVLALAFLSGYYVTL), 206–226 (ILAVLLPPVMLLIDGNVAYWH), and 233–253 (FWNQMKLLGESVGIFGAAVIL).

Its subcellular location is the membrane. In terms of biological role, may activate NF-kappa-B signaling pathways. This Bos taurus (Bovine) protein is Transmembrane protein 101 (TMEM101).